The following is a 395-amino-acid chain: Phosphoglycerate kinase (395 aa).

Substrate-binding positions include 21–23 (DFN), Arg-36, 59–62 (HLGR), Arg-120, and Arg-153. ATP is bound by residues Lys-203, Gly-294, Glu-325, and 351–354 (GGDS).

The protein belongs to the phosphoglycerate kinase family. Monomer.

The protein localises to the cytoplasm. The catalysed reaction is (2R)-3-phosphoglycerate + ATP = (2R)-3-phospho-glyceroyl phosphate + ADP. It functions in the pathway carbohydrate degradation; glycolysis; pyruvate from D-glyceraldehyde 3-phosphate: step 2/5. This Finegoldia magna (strain ATCC 29328 / DSM 20472 / WAL 2508) (Peptostreptococcus magnus) protein is Phosphoglycerate kinase.